The sequence spans 4538 residues: Polyketide synthase PksL (4538 aa).

Residues 1–123 (MRWRSNVKKI…ADMHADSPAI (123 aa)) form an N-terminal hotdog fold 1 region. The 285-residue stretch at 1–285 (MRWRSNVKKI…SKLVREAELI (285 aa)) folds into the PKS/mFAS DH 1 domain. Histidine 26 (proton acceptor; for dehydratase activity 1) is an active-site residue. The C-terminal hotdog fold 1 stretch occupies residues 138 to 285 (QNVVQLDDVY…SKLVREAELI (148 aa)). Aspartate 199 serves as the catalytic Proton donor; for dehydratase activity 1. Residues 289–314 (HQDAQETQMTRADTAERDKPADMVSS) are disordered. Residues 320-394 (SEAEQFVSQL…ELSAFLAEEY (75 aa)) enclose the Carrier 1 domain. Serine 354 bears the O-(pantetheine 4'-phosphoryl)serine mark. Positions 433–871 (AGDIAIIGLA…GSNAHIILEE (439 aa)) constitute a Ketosynthase family 3 (KS3) 1 domain. Catalysis depends on for beta-ketoacyl synthase 1 activity residues cysteine 609, histidine 744, and histidine 784. The dehydratase stretch occupies residues 1048–1226 (HILHPLLHQN…DSLYAGENGV (179 aa)). The segment at 1051–1175 (HPLLHQNVSD…GSAVLCEAGE (125 aa)) is N-terminal hotdog fold 2. Positions 1051 to 1340 (HPLLHQNVSD…ARVLETDQEG (290 aa)) constitute a PKS/mFAS DH 2 domain. The active-site Proton acceptor; for dehydratase activity 2 is the histidine 1080. A C-terminal hotdog fold 2 region spans residues 1189-1340 (NGRTLSPFDC…ARVLETDQEG (152 aa)). The Proton donor; for dehydratase activity 2 role is filled by aspartate 1251. Residues 1520–1713 (KGVYLITGGA…WKDGGMQIDA (194 aa)) are beta-ketoacyl reductase 1. Positions 1800–1873 (EKAENYFKQV…SLTRYFIDSR (74 aa)) constitute a Carrier 2 domain. Serine 1834 is modified (O-(pantetheine 4'-phosphoryl)serine). The region spanning 1926 to 2365 (TEEIAIIGIS…GVNAHILIEE (440 aa)) is the Ketosynthase family 3 (KS3) 2 domain. Catalysis depends on for beta-ketoacyl synthase 2 activity residues cysteine 2103, histidine 2238, and histidine 2278. The segment at 2546–2568 (TEEPFAPVQPVIPKPSVDREASG) is disordered. Carrier domains lie at 2597–2674 (ITAE…AHEL) and 2738–2815 (VAIE…KSEL). An O-(pantetheine 4'-phosphoryl)serine mark is found at serine 2634 and serine 2775. A disordered region spans residues 2828–2854 (SFEAAQQKPAASSHPKPAERPLQPVQH). A Ketosynthase family 3 (KS3) 3 domain is found at 2873–3294 (EDAIAIVGMS…GTNAHIVIEE (422 aa)). Active-site for beta-ketoacyl synthase 3 activity residues include cysteine 3040, histidine 3175, and histidine 3215. Residues 3686-3887 (DKVLLITGGT…PNWKETGLGE (202 aa)) are beta-ketoacyl reductase 2. The region spanning 3960–4037 (NLFPETVDWL…SFAHWLISKY (78 aa)) is the Carrier 5 domain. Serine 3997 is subject to O-(pantetheine 4'-phosphoryl)serine. Positions 4082–4485 (AEDIAIIGLS…GTNAHLIIEG (404 aa)) constitute a Ketosynthase family 3 (KS3) 4 domain. The active-site For beta-ketoacyl synthase 4 activity is cysteine 4237.

Requires pantetheine 4'-phosphate as cofactor.

It is found in the cytoplasm. Its pathway is antibiotic biosynthesis; bacillaene biosynthesis. In terms of biological role, involved in some intermediate steps for the synthesis of the antibiotic polyketide bacillaene which is involved in secondary metabolism. The chain is Polyketide synthase PksL (pksL) from Bacillus subtilis (strain 168).